A 429-amino-acid polypeptide reads, in one-letter code: Serum response factor-binding protein 1 (429 aa).

Ala2 is subject to N-acetylalanine. Coiled coils occupy residues 42 to 67 (KGTE…AMKE) and 108 to 144 (LLKK…EDNH). 2 stretches are compositionally biased toward polar residues: residues 128–138 (QNVTEVESSKN) and 146–160 (KNTL…NLQR). 2 disordered regions span residues 128–285 (QNVT…GDDF) and 311–429 (EKVF…TFDD). A compositionally biased stretch (basic and acidic residues) spans 183–195 (NSKEKIAKMEHGP). A Glycyl lysine isopeptide (Lys-Gly) (interchain with G-Cter in SUMO2) cross-link involves residue Lys190. 5 positions are modified to phosphoserine: Ser203, Ser205, Ser264, Ser279, and Ser281. Acidic residues predominate over residues 249-265 (GGEELCEEEKEYFDDST). Residues 311–341 (EKVFLKEDTGETHGDTRNDKTKPSTETRKLE) are compositionally biased toward basic and acidic residues. A Glycyl lysine isopeptide (Lys-Gly) (interchain with G-Cter in SUMO2) cross-link involves residue Lys316. Phosphoserine occurs at positions 349, 351, and 367. Residues 357–367 (NFKEQAPKTRS) show a composition bias toward basic and acidic residues. Positions 373-383 (NEPQFKNQFNK) are enriched in polar residues.

As to quaternary structure, interacts with SRF. Forms complexes with SRF and SRF cofactors ARID2, MYOCD and NKX2-5. Interacts with the N-terminus of SLC2A4.

The protein localises to the cytoplasm. It is found in the perinuclear region. May be involved in regulating transcriptional activation of cardiac genes during the aging process. May play a role in biosynthesis and/or processing of SLC2A4 in adipose cells. The polypeptide is Serum response factor-binding protein 1 (Pongo abelii (Sumatran orangutan)).